A 266-amino-acid chain; its full sequence is PDZ domain-containing protein 9 (266 aa).

The 83-residue stretch at 27-109 (KVIQTKLTVG…GTVLQIKAYR (83 aa)) folds into the PDZ domain.

This Mus musculus (Mouse) protein is PDZ domain-containing protein 9 (Pdzd9).